The following is a 342-amino-acid chain: tRNA (guanine(26)-N(2))-dimethyltransferase (342 aa).

In terms of domain architecture, Trm1 methyltransferase spans 1–336; the sequence is MRITEGSAVI…CPYAEVSEIL (336 aa). S-adenosyl-L-methionine-binding residues include arginine 35, arginine 60, and glutamate 76.

It belongs to the class I-like SAM-binding methyltransferase superfamily. Trm1 family.

It catalyses the reaction guanosine(26) in tRNA + 2 S-adenosyl-L-methionine = N(2)-dimethylguanosine(26) in tRNA + 2 S-adenosyl-L-homocysteine + 2 H(+). Dimethylates a single guanine residue at position 26 of a number of tRNAs using S-adenosyl-L-methionine as donor of the methyl groups. This Thermoplasma volcanium (strain ATCC 51530 / DSM 4299 / JCM 9571 / NBRC 15438 / GSS1) protein is tRNA (guanine(26)-N(2))-dimethyltransferase.